The sequence spans 309 residues: uncharacterized protein (309 aa).

The 238-residue stretch at 17 to 254 folds into the Radical SAM core domain; the sequence is RYGQKVHKLT…AGEMIRHTPP (238 aa). The [4Fe-4S] cluster site is built by cysteine 33, cysteine 45, and cysteine 48.

Belongs to the radical SAM superfamily. The cofactor is [4Fe-4S] cluster.

This is an uncharacterized protein from Escherichia coli O157:H7.